The sequence spans 388 residues: Peptide chain release factor subunit 1 (388 aa).

This sequence belongs to the eukaryotic release factor 1 family. As to quaternary structure, heterodimer of two subunits, one of which binds GTP.

The protein localises to the cytoplasm. Functionally, directs the termination of nascent peptide synthesis (translation) in response to the termination codons UAA, UAG and UGA. This is Peptide chain release factor subunit 1 (prf1) from Pyrobaculum aerophilum (strain ATCC 51768 / DSM 7523 / JCM 9630 / CIP 104966 / NBRC 100827 / IM2).